We begin with the raw amino-acid sequence, 2000 residues long: Myosin-14 (2000 aa).

N-acetylalanine is present on A2. T33 is subject to Phosphothreonine. A Myosin N-terminal SH3-like domain is found at 47-97 (TARRMVWVPSELHGFEAAALRDEGEEEAEVELAESGRRLRLPRDQIQRMNP). Phosphoserine is present on S56. The Myosin motor domain occupies 101–804 (SKAEDMAELT…VLAQLEEERD (704 aa)). ATP is bound at residue 194–201 (GESGAGKT). Residues 682–704 (LSRLMATLSNTNPSFVRCIVPNH) form an actin-binding region. The region spanning 807–836 (VTDIIVSFQAAARGYLARRAFQRRQQQQSA) is the IQ domain. Positions 866 to 1951 (LQVTRQDEVL…VTTLRNRLRR (1086 aa)) form a coiled coil. Residue S925 is modified to Phosphoserine. Positions 1173–1197 (RGELEDTLDSTNAQQELRSKREQEV) are disordered. T1198 is subject to Phosphothreonine. Phosphoserine is present on residues S1249 and S1280. Disordered regions lie at residues 1260 to 1311 (ELSS…AELE), 1597 to 1629 (HERD…RDEE), 1720 to 1751 (SDRA…TLEE), 1910 to 1942 (AEEE…NREV), and 1967 to 2000 (LEEG…ATPQ). Basic and acidic residues predominate over residues 1290 to 1304 (SDSERARSEAAEKLQ). Residues 1720-1732 (SDRARRQAQQDRD) are compositionally biased toward basic and acidic residues. Acidic residues predominate over residues 1971-1980 (VASDEEEAEG). Phosphoserine occurs at positions 1973 and 1985. The span at 1981-1991 (AEPGSAPGQEP) shows a compositional bias: low complexity. Residue T1998 is modified to Phosphothreonine.

Belongs to the TRAFAC class myosin-kinesin ATPase superfamily. Myosin family. Myosin is a hexameric protein that consists of 2 heavy chain subunits (MHC), 2 alkali light chain subunits (MLC) and 2 regulatory light chain subunits (MLC-2). Highest levels in lung, kidney, brain and colon, very low levels in liver and bladder and no expression in spleen or seminal vesicle (at protein level). Isoform 1 is expressed in liver, kidney and testis with low levels in skeletal muscle and heart. Isoform 1 and isoform 2 are expressed in brain and lung. Isoform 2 is the main isoform expressed in skeletal muscle and heart. Isoform 3 is limited to brain stem, cerebellum and spinal cord.

Its function is as follows. Cellular myosin that appears to play a role in cytokinesis, cell shape, and specialized functions such as secretion and capping. In Mus musculus (Mouse), this protein is Myosin-14 (Myh14).